A 295-amino-acid chain; its full sequence is Zinc finger CCCH domain-containing protein 44 (295 aa).

Residues 1–31 are disordered; sequence MEAGGGKRAAPEGTNGAAKRARASESSQVGV. C3H1-type zinc fingers lie at residues 32-60 and 98-126; these read GSKL…HNFP and SVKT…HGER. Residues 166 to 230 enclose the KH domain; sequence SATAKISVDA…DQIKHASAMV (65 aa). The C3H1-type 3 zinc-finger motif lies at 259-286; the sequence is NFKTKLCENFNKGSCTFGDRCHFAHGES.

This chain is Zinc finger CCCH domain-containing protein 44, found in Oryza sativa subsp. japonica (Rice).